The chain runs to 266 residues: Gasdermin bGSDM (266 aa).

The next 4 beta stranded transmembrane spans lie at 67-83, 95-113, 162-179, and 187-203; these read LQQN…GVDI, KLRG…ISYQ, SFSV…DLEA, and ADVN…LMEY.

It belongs to the bacterial gasdermin family. In terms of assembly, monomer. As to quaternary structure, forms large, homooligomeric ring-shaped pores when inserted in membranes.

The protein localises to the cytoplasm. Its subcellular location is the cell inner membrane. The full-length protein before cleavage is inactive: intramolecular interactions between the N-terminal domain and the C-terminal region mediate autoinhibition. The pyroptosis-like-inducing activity is carried by the released N-terminal domain (Gasdermin bGSDM, N-terminus). Functionally, precursor of a pore-forming protein involved in defense against bacteriophages. Expression of bGSDM and the neighboring protease gene (Gilli_2517) is not toxic in E.coli. Cleavage of this precursor by its dedicated protease releases the active moiety (gasdermin bGSDM, N-terminus) which inserts into membranes, forming pores and triggering cell death. In terms of biological role, pore-forming protein that causes membrane permeabilization via a pyroptosis-like activity. Makes ring-like pores when released. In Gillisia limnaea (strain DSM 15749 / LMG 21470 / R-8282), this protein is Gasdermin bGSDM.